Consider the following 83-residue polypeptide: Kappa-theraphotoxin-Cg2a (83 aa).

A signal peptide spans 1–21; sequence MKGSAFAIILGLVVLCACSFA. Positions 22 to 53 are excised as a propeptide; the sequence is EDEQDQFASPNELLRSMFLESRHELIPEVEGR. Disulfide bonds link C55–C69, C62–C74, and C68–C78. L82 is subject to Leucine amide.

Belongs to the neurotoxin 30 (phrixotoxin) family. In terms of tissue distribution, expressed by the venom gland.

It localises to the secreted. Its function is as follows. Inhibits voltage-gated potassium channels of the subtype Kv4.1/KCND1 with high affinity and shows weak effects on Kv4.2/KCND2 and Kv2.1/KCNB1 subtypes. The toxin modifies the gating behavior of the channel and may interact with the S3-S4 extracellular loop. This is Kappa-theraphotoxin-Cg2a from Chilobrachys guangxiensis (Chinese earth tiger tarantula).